Consider the following 387-residue polypeptide: Phosphoglycerate kinase (387 aa).

Residues 21 to 23 (DLN), arginine 36, 59 to 62 (HLGR), arginine 113, and arginine 146 contribute to the substrate site. ATP contacts are provided by residues lysine 197, glutamate 314, and 340-343 (GGDT).

Belongs to the phosphoglycerate kinase family. In terms of assembly, monomer.

It is found in the cytoplasm. It catalyses the reaction (2R)-3-phosphoglycerate + ATP = (2R)-3-phospho-glyceroyl phosphate + ADP. It participates in carbohydrate degradation; glycolysis; pyruvate from D-glyceraldehyde 3-phosphate: step 2/5. This is Phosphoglycerate kinase from Klebsiella pneumoniae (strain 342).